The primary structure comprises 331 residues: Aromatic 2-oxoacid reductase (331 aa).

NAD(+) is bound by residues 154–155 (RI), Asp-175, 205–206 (AP), Asn-211, 232–234 (AAR), and Asp-258. The active site involves Arg-234. Glu-263 is a catalytic residue. Residue His-295 is the Proton donor of the active site.

The protein belongs to the D-isomer specific 2-hydroxyacid dehydrogenase family.

The catalysed reaction is (R)-3-phenyllactate + NAD(+) = 3-phenylpyruvate + NADH + H(+). It catalyses the reaction (2R)-2-hydroxy-3-(4-hydroxyphenyl)propanoate + NAD(+) = 3-(4-hydroxyphenyl)pyruvate + NADH + H(+). The enzyme catalyses 3-(indol-3-yl)lactate + NAD(+) = indole-3-pyruvate + NADH + H(+). It participates in amino-acid degradation. Functionally, essential for the reductive metabolism of L-phenylalanine, L-tyrosine and L-tryptophan. Catalyzes the conversion of phenylpyruvic acid to phenyllactic acid, 4-hydroxy-phenylpyruvic acid to 4-hydroxy-phenyllactic acid, and indolepyruvic acid to indolelactic acid. The sequence is that of Aromatic 2-oxoacid reductase from Clostridium sporogenes (strain ATCC 15579).